Here is a 340-residue protein sequence, read N- to C-terminus: UDP-3-O-(3-hydroxymyristoyl)glucosamine N-acyltransferase (340 aa).

Residue His239 is the Proton acceptor of the active site.

The protein belongs to the transferase hexapeptide repeat family. LpxD subfamily. As to quaternary structure, homotrimer.

The enzyme catalyses a UDP-3-O-[(3R)-3-hydroxyacyl]-alpha-D-glucosamine + a (3R)-hydroxyacyl-[ACP] = a UDP-2-N,3-O-bis[(3R)-3-hydroxyacyl]-alpha-D-glucosamine + holo-[ACP] + H(+). It carries out the reaction UDP-3-O-[(3R)-3-hydroxytetradecanoyl]-alpha-D-glucosamine + (3R)-hydroxytetradecanoyl-[ACP] = UDP-2-N,3-O-bis[(3R)-3-hydroxytetradecanoyl]-alpha-D-glucosamine + holo-[ACP] + H(+). It participates in glycolipid biosynthesis; lipid IV(A) biosynthesis; lipid IV(A) from (3R)-3-hydroxytetradecanoyl-[acyl-carrier-protein] and UDP-N-acetyl-alpha-D-glucosamine: step 3/6. In terms of biological role, catalyzes the N-acylation of UDP-3-O-(hydroxytetradecanoyl)glucosamine using 3-hydroxytetradecanoyl-ACP as the acyl donor. Is involved in the biosynthesis of lipid A, a phosphorylated glycolipid that anchors the lipopolysaccharide to the outer membrane of the cell. The polypeptide is UDP-3-O-(3-hydroxymyristoyl)glucosamine N-acyltransferase (Yersinia pestis bv. Antiqua (strain Antiqua)).